The chain runs to 166 residues: Small ribosomal subunit protein uS5 (166 aa).

In terms of domain architecture, S5 DRBM spans 11 to 74; sequence LQEKLIAVNR…EKARRNMMNV (64 aa).

This sequence belongs to the universal ribosomal protein uS5 family. In terms of assembly, part of the 30S ribosomal subunit. Contacts proteins S4 and S8.

In terms of biological role, with S4 and S12 plays an important role in translational accuracy. Located at the back of the 30S subunit body where it stabilizes the conformation of the head with respect to the body. In Sodalis glossinidius (strain morsitans), this protein is Small ribosomal subunit protein uS5.